The following is a 727-amino-acid chain: Polyphosphate kinase (727 aa).

ATP is bound at residue Asn82. 2 residues coordinate Mg(2+): Arg412 and Arg442. The active-site Phosphohistidine intermediate is His472. ATP contacts are provided by Tyr505, Arg601, and His629.

Belongs to the polyphosphate kinase 1 (PPK1) family. The cofactor is Mg(2+). Post-translationally, an intermediate of this reaction is the autophosphorylated ppk in which a phosphate is covalently linked to a histidine residue through a N-P bond.

It carries out the reaction [phosphate](n) + ATP = [phosphate](n+1) + ADP. In terms of biological role, catalyzes the reversible transfer of the terminal phosphate of ATP to form a long-chain polyphosphate (polyP). This chain is Polyphosphate kinase, found in Pseudomonas putida (strain ATCC 47054 / DSM 6125 / CFBP 8728 / NCIMB 11950 / KT2440).